Here is a 293-residue protein sequence, read N- to C-terminus: ATP synthase gamma chain (293 aa).

The protein belongs to the ATPase gamma chain family. As to quaternary structure, F-type ATPases have 2 components, CF(1) - the catalytic core - and CF(0) - the membrane proton channel. CF(1) has five subunits: alpha(3), beta(3), gamma(1), delta(1), epsilon(1). CF(0) has three main subunits: a, b and c.

It is found in the cell inner membrane. Its function is as follows. Produces ATP from ADP in the presence of a proton gradient across the membrane. The gamma chain is believed to be important in regulating ATPase activity and the flow of protons through the CF(0) complex. In Leptothrix cholodnii (strain ATCC 51168 / LMG 8142 / SP-6) (Leptothrix discophora (strain SP-6)), this protein is ATP synthase gamma chain.